Consider the following 146-residue polypeptide: PTS system fructose-specific EIIA component (146 aa).

One can recognise a PTS EIIA type-4 domain in the interval 1–124; sequence MISVIISGHG…NLKAMSQQSF (124 aa). H9 (tele-phosphohistidine intermediate) is an active-site residue. H9 carries the post-translational modification Phosphohistidine; by HPr.

It localises to the cytoplasm. In terms of biological role, the phosphoenolpyruvate-dependent sugar phosphotransferase system (sugar PTS), a major carbohydrate active transport system, catalyzes the phosphorylation of incoming sugar substrates concomitantly with their translocation across the cell membrane. The enzyme II LevDE PTS system is involved in fructose transport. Functionally, levD and LevE act as negative regulators of the levanase operon. They may be involved in a PTS-mediated phosphorylation of a regulator. This Bacillus subtilis (strain 168) protein is PTS system fructose-specific EIIA component.